The following is a 278-amino-acid chain: Dermonecrotic toxin LlSicTox-alphaIII3iii (278 aa).

The active site involves His5. 2 residues coordinate Mg(2+): Glu25 and Asp27. Residue His40 is the Nucleophile of the active site. Cys44 and Cys50 are joined by a disulfide. Residue Asp84 coordinates Mg(2+).

This sequence belongs to the arthropod phospholipase D family. Class I subfamily. Mg(2+) serves as cofactor. In terms of tissue distribution, expressed by the venom gland.

Its subcellular location is the secreted. It catalyses the reaction an N-(acyl)-sphingosylphosphocholine = an N-(acyl)-sphingosyl-1,3-cyclic phosphate + choline. The catalysed reaction is an N-(acyl)-sphingosylphosphoethanolamine = an N-(acyl)-sphingosyl-1,3-cyclic phosphate + ethanolamine. The enzyme catalyses a 1-acyl-sn-glycero-3-phosphocholine = a 1-acyl-sn-glycero-2,3-cyclic phosphate + choline. It carries out the reaction a 1-acyl-sn-glycero-3-phosphoethanolamine = a 1-acyl-sn-glycero-2,3-cyclic phosphate + ethanolamine. Functionally, dermonecrotic toxins cleave the phosphodiester linkage between the phosphate and headgroup of certain phospholipids (sphingolipid and lysolipid substrates), forming an alcohol (often choline) and a cyclic phosphate. This toxin acts on sphingomyelin (SM). It may also act on ceramide phosphoethanolamine (CPE), lysophosphatidylcholine (LPC) and lysophosphatidylethanolamine (LPE), but not on lysophosphatidylserine (LPS), and lysophosphatidylglycerol (LPG). It acts by transphosphatidylation, releasing exclusively cyclic phosphate products as second products. Induces dermonecrosis, hemolysis, increased vascular permeability, edema, inflammatory response, and platelet aggregation. The polypeptide is Dermonecrotic toxin LlSicTox-alphaIII3iii (Loxosceles laeta (South American recluse spider)).